Here is a 68-residue protein sequence, read N- to C-terminus: Large ribosomal subunit protein uL29 (68 aa).

This sequence belongs to the universal ribosomal protein uL29 family.

In Streptococcus uberis (strain ATCC BAA-854 / 0140J), this protein is Large ribosomal subunit protein uL29.